Consider the following 190-residue polypeptide: Large ribosomal subunit protein uL10 (190 aa).

Residues 170–190 (AAGAPAEAAPVEAPAAETVDA) are disordered.

It belongs to the universal ribosomal protein uL10 family. Part of the ribosomal stalk of the 50S ribosomal subunit. The N-terminus interacts with L11 and the large rRNA to form the base of the stalk. The C-terminus forms an elongated spine to which L12 dimers bind in a sequential fashion forming a multimeric L10(L12)X complex.

Forms part of the ribosomal stalk, playing a central role in the interaction of the ribosome with GTP-bound translation factors. This is Large ribosomal subunit protein uL10 from Kineococcus radiotolerans (strain ATCC BAA-149 / DSM 14245 / SRS30216).